The primary structure comprises 101 residues: NAD(P)H-quinone oxidoreductase subunit 4L, chloroplastic (101 aa).

A run of 3 helical transmembrane segments spans residues 2 to 22, 32 to 52, and 61 to 81; these read MLEHVLVLSAYLFSIGIYGLI, MCLELILNAVNMNLVTFSDLF, and VFSIFVIAIAAAEAAIGPAIV.

Belongs to the complex I subunit 4L family. As to quaternary structure, NDH is composed of at least 16 different subunits, 5 of which are encoded in the nucleus.

It localises to the plastid. Its subcellular location is the chloroplast thylakoid membrane. The catalysed reaction is a plastoquinone + NADH + (n+1) H(+)(in) = a plastoquinol + NAD(+) + n H(+)(out). It catalyses the reaction a plastoquinone + NADPH + (n+1) H(+)(in) = a plastoquinol + NADP(+) + n H(+)(out). In terms of biological role, NDH shuttles electrons from NAD(P)H:plastoquinone, via FMN and iron-sulfur (Fe-S) centers, to quinones in the photosynthetic chain and possibly in a chloroplast respiratory chain. The immediate electron acceptor for the enzyme in this species is believed to be plastoquinone. Couples the redox reaction to proton translocation, and thus conserves the redox energy in a proton gradient. This is NAD(P)H-quinone oxidoreductase subunit 4L, chloroplastic from Nuphar advena (Common spatterdock).